Here is a 40-residue protein sequence, read N- to C-terminus: Serine proteinase-like BMK-CBP (40 aa).

In terms of domain architecture, Peptidase S1 spans 1–40 (IFGGTFAKNGEYPWMVVIDLPEFACGGVLISKKFVLTAAH). Catalysis depends on histidine 40, which acts as the Charge relay system.

It belongs to the peptidase S1 family. Expressed by the venom gland.

It localises to the secreted. Functionally, binds in a dose-dependent manner to the breast cancer cell line MCF-7. The protein is Serine proteinase-like BMK-CBP of Olivierus martensii (Manchurian scorpion).